A 309-amino-acid chain; its full sequence is Protein FdhE homolog (309 aa).

Belongs to the FdhE family.

Its subcellular location is the cytoplasm. Necessary for formate dehydrogenase activity. This Cronobacter sakazakii (strain ATCC BAA-894) (Enterobacter sakazakii) protein is Protein FdhE homolog.